Here is a 247-residue protein sequence, read N- to C-terminus: Ubiquinone biosynthesis O-methyltransferase (247 aa).

S-adenosyl-L-methionine-binding residues include R45, G65, D86, and L130.

It belongs to the methyltransferase superfamily. UbiG/COQ3 family.

It carries out the reaction a 3-demethylubiquinol + S-adenosyl-L-methionine = a ubiquinol + S-adenosyl-L-homocysteine + H(+). The enzyme catalyses a 3-(all-trans-polyprenyl)benzene-1,2-diol + S-adenosyl-L-methionine = a 2-methoxy-6-(all-trans-polyprenyl)phenol + S-adenosyl-L-homocysteine + H(+). Its pathway is cofactor biosynthesis; ubiquinone biosynthesis. Functionally, O-methyltransferase that catalyzes the 2 O-methylation steps in the ubiquinone biosynthetic pathway. The polypeptide is Ubiquinone biosynthesis O-methyltransferase (Alkalilimnicola ehrlichii (strain ATCC BAA-1101 / DSM 17681 / MLHE-1)).